Here is a 344-residue protein sequence, read N- to C-terminus: Aspartate carbamoyltransferase catalytic subunit (344 aa).

A disordered region spans residues 1–30 (MPESPPLPKRSPLMTSSTTRPASDYPPGGD). Carbamoyl phosphate contacts are provided by Arg-88 and Thr-89. Residue Lys-116 coordinates L-aspartate. Arg-138, His-166, and Gln-169 together coordinate carbamoyl phosphate. Positions 199 and 253 each coordinate L-aspartate. Carbamoyl phosphate contacts are provided by Gly-294 and Pro-295.

This sequence belongs to the aspartate/ornithine carbamoyltransferase superfamily. ATCase family. As to quaternary structure, heterododecamer (2C3:3R2) of six catalytic PyrB chains organized as two trimers (C3), and six regulatory PyrI chains organized as three dimers (R2).

It carries out the reaction carbamoyl phosphate + L-aspartate = N-carbamoyl-L-aspartate + phosphate + H(+). It participates in pyrimidine metabolism; UMP biosynthesis via de novo pathway; (S)-dihydroorotate from bicarbonate: step 2/3. Catalyzes the condensation of carbamoyl phosphate and aspartate to form carbamoyl aspartate and inorganic phosphate, the committed step in the de novo pyrimidine nucleotide biosynthesis pathway. This chain is Aspartate carbamoyltransferase catalytic subunit, found in Sphingopyxis alaskensis (strain DSM 13593 / LMG 18877 / RB2256) (Sphingomonas alaskensis).